The following is a 313-amino-acid chain: MKKLNIIFAGTPDISAQVLKDLYKSQHNIQAVLTQPDRAKGRGKKVQFSPVKEVALANHTPVFQPLSFKKNPEVLEQIKQLKPDVIVVIAYGIIVPQEFLDIPRYGCLNIHVSLLPKWRGAAPIQRAIQAGDTKTGVCIMQMDAGLDTGDILNTLEIEIQETDTSQTLHDKFAKLSIKPLLETLEKIEIIKPEPQQGEPTYAHKITKQEGLIDFTKSAWQISCHIRAFTPWPGAYFILDDEAIKVGEFEILYQNTDNRKAGTIIDIYRSGFDIATSDKIIRFRQLQFPNKKMLNIVDILNGKDLDKYIGYKLG.

113 to 116 serves as a coordination point for (6S)-5,6,7,8-tetrahydrofolate; it reads SLLP.

This sequence belongs to the Fmt family.

The catalysed reaction is L-methionyl-tRNA(fMet) + (6R)-10-formyltetrahydrofolate = N-formyl-L-methionyl-tRNA(fMet) + (6S)-5,6,7,8-tetrahydrofolate + H(+). Attaches a formyl group to the free amino group of methionyl-tRNA(fMet). The formyl group appears to play a dual role in the initiator identity of N-formylmethionyl-tRNA by promoting its recognition by IF2 and preventing the misappropriation of this tRNA by the elongation apparatus. The polypeptide is Methionyl-tRNA formyltransferase (Francisella tularensis subsp. tularensis (strain FSC 198)).